We begin with the raw amino-acid sequence, 543 residues long: MFS-type transporter pyvG (543 aa).

The interval 24 to 71 (PPTEQQPGFQLPPPYRLAATRTQPQQQQEQEQEQEQAKPATRPPWNEP) is disordered. N-linked (GlcNAc...) asparagine glycosylation is present at Asn-94. 12 helical membrane-spanning segments follow: residues 101–121 (LLVYLEVNLITFMVYMSVAIF), 141–161 (LGMSLYVLGYGTGPMIWSPLS), 178–198 (IFLLLSIPTAVVNNVPGFLIL), 203–223 (GFFGSPGLATGGASIADVTGL), 230–250 (LYVWAVCSIAGPAVAPVIAGF), 259–279 (WSMWEVLWAAGGCFVFLLFLP), 335–355 (PAILFTTVYIGLVYAIFYSYF), 374–394 (GLIFLGAIVGTLLVLPGYFAF), 415–435 (LVPALCGSVLVPVGLFLFAWT), 440–460 (LHWVVPTVGLVLEVAGMSLVI), 476–496 (ASLFAINDLARAYLAFAAIMW), and 512–532 (LLAGLTVGCVGGMFTLYWWGP).

This sequence belongs to the major facilitator superfamily. CAR1 family.

It localises to the cell membrane. In terms of biological role, MFS-type transporter; part of the gene cluster that mediates the biosynthesis of pyranoviolin A, a pyranonigrin analog with a C-3 methoxy group. May be involved in the secretion of pyranoviolin A. This is MFS-type transporter pyvG from Aspergillus violaceofuscus (strain CBS 115571).